Reading from the N-terminus, the 187-residue chain is Chromophore lyase CpcS/CpeS 2 (187 aa).

This sequence belongs to the CpcS/CpeS biliprotein lyase family.

Functionally, covalently attaches a chromophore to Cys residue(s) of phycobiliproteins. This chain is Chromophore lyase CpcS/CpeS 2, found in Synechococcus sp. (strain JA-3-3Ab) (Cyanobacteria bacterium Yellowstone A-Prime).